A 188-amino-acid chain; its full sequence is Crossover junction endodeoxyribonuclease RuvC (188 aa).

Active-site residues include D7, E68, and D141. D7, E68, and D141 together coordinate Mg(2+).

The protein belongs to the RuvC family. In terms of assembly, homodimer which binds Holliday junction (HJ) DNA. The HJ becomes 2-fold symmetrical on binding to RuvC with unstacked arms; it has a different conformation from HJ DNA in complex with RuvA. In the full resolvosome a probable DNA-RuvA(4)-RuvB(12)-RuvC(2) complex forms which resolves the HJ. Requires Mg(2+) as cofactor.

It localises to the cytoplasm. The enzyme catalyses Endonucleolytic cleavage at a junction such as a reciprocal single-stranded crossover between two homologous DNA duplexes (Holliday junction).. Functionally, the RuvA-RuvB-RuvC complex processes Holliday junction (HJ) DNA during genetic recombination and DNA repair. Endonuclease that resolves HJ intermediates. Cleaves cruciform DNA by making single-stranded nicks across the HJ at symmetrical positions within the homologous arms, yielding a 5'-phosphate and a 3'-hydroxyl group; requires a central core of homology in the junction. The consensus cleavage sequence is 5'-(A/T)TT(C/G)-3'. Cleavage occurs on the 3'-side of the TT dinucleotide at the point of strand exchange. HJ branch migration catalyzed by RuvA-RuvB allows RuvC to scan DNA until it finds its consensus sequence, where it cleaves and resolves the cruciform DNA. In Mycobacterium tuberculosis (strain ATCC 25177 / H37Ra), this protein is Crossover junction endodeoxyribonuclease RuvC.